Reading from the N-terminus, the 567-residue chain is Urease subunit alpha (567 aa).

Residues 129-567 form the Urease domain; that stretch reads GGIDTHIHWI…LPMAQRYFLF (439 aa). Ni(2+) contacts are provided by histidine 134, histidine 136, and lysine 217. N6-carboxylysine is present on lysine 217. Histidine 219 serves as a coordination point for substrate. Ni(2+) contacts are provided by histidine 246 and histidine 272. Histidine 320 (proton donor) is an active-site residue. Aspartate 360 serves as a coordination point for Ni(2+).

The protein belongs to the metallo-dependent hydrolases superfamily. Urease alpha subunit family. As to quaternary structure, heterotrimer of UreA (gamma), UreB (beta) and UreC (alpha) subunits. Three heterotrimers associate to form the active enzyme. The apoenzyme interacts with an accessory complex composed of UreD, UreF and UreG, which is required for the assembly of the nickel containing metallocenter of UreC. The UreE protein may also play a direct role as a metallochaperone in nickel transfer to the urease apoprotein. It depends on Ni cation as a cofactor. Carboxylation allows a single lysine to coordinate two nickel ions.

The protein localises to the cytoplasm. It catalyses the reaction urea + 2 H2O + H(+) = hydrogencarbonate + 2 NH4(+). It functions in the pathway nitrogen metabolism; urea degradation; CO(2) and NH(3) from urea (urease route): step 1/1. The apoenzyme can be activated in vitro in the presence of nickel ions and carbon dioxide, which promotes carboxylation of Lys-217. In Klebsiella aerogenes (Enterobacter aerogenes), this protein is Urease subunit alpha.